Here is a 198-residue protein sequence, read N- to C-terminus: Molybdopterin synthase catalytic subunit (198 aa).

Substrate-binding positions include 107–108 (HR), Lys-123, and 130–132 (KKE).

This sequence belongs to the MoaE family. MOCS2B subfamily. In terms of assembly, heterotetramer; composed of 2 small (MOCS2A) and 2 large (MOCS2B) subunits.

Its subcellular location is the cytoplasm. The enzyme catalyses 2 [molybdopterin-synthase sulfur-carrier protein]-C-terminal-Gly-aminoethanethioate + cyclic pyranopterin phosphate + H2O = molybdopterin + 2 [molybdopterin-synthase sulfur-carrier protein]-C-terminal Gly-Gly + 2 H(+). It participates in cofactor biosynthesis; molybdopterin biosynthesis. Its function is as follows. Catalytic subunit of the molybdopterin synthase complex, a complex that catalyzes the conversion of precursor Z into molybdopterin. Acts by mediating the incorporation of 2 sulfur atoms from thiocarboxylated MOCS2A into precursor Z to generate a dithiolene group. The protein is Molybdopterin synthase catalytic subunit of Arabidopsis thaliana (Mouse-ear cress).